A 249-amino-acid chain; its full sequence is General transcription factor IIF subunit 2 (249 aa).

Ala2 carries the post-translational modification N-acetylalanine. 3 positions are modified to N6-acetyllysine: Lys22, Lys33, and Lys137. A Phosphoserine modification is found at Ser142. DNA contacts are provided by Gly227 and His229. Phosphoserine is present on Ser248.

It belongs to the TFIIF beta subunit family. Heterodimer of an alpha and a beta subunit. Interacts with HTATSF1 and GPBP1. Interacts with URI1. Interacts with GTF2B (via N-terminus); this interaction is inhibited in presence of GTF2F1. Part of TBP-based Pol II pre-initiation complex (PIC), in which Pol II core assembles with general transcription factors and other specific initiation factors including GTF2E1, GTF2E2, GTF2F1, GTF2F2, TCEA1, ERCC2, ERCC3, GTF2H2, GTF2H3, GTF2H4, GTF2H5, GTF2A1, GTF2A2, GTF2B and TBP; this large multi-subunit PIC complex mediates DNA unwinding and targets Pol II core to the transcription start site where the first phosphodiester bond forms.

The protein resides in the nucleus. Functionally, TFIIF is a general transcription initiation factor that binds to RNA polymerase II and helps to recruit it to the initiation complex in collaboration with TFIIB. This Bos taurus (Bovine) protein is General transcription factor IIF subunit 2 (GTF2F2).